The sequence spans 643 residues: Carboxy-terminal kinesin 2 (643 aa).

Disordered regions lie at residues 1–42 (MDST…SSLE) and 81–101 (MRPK…KTKV). Residues 1–116 (MDSTDKKVQV…QPAAIGAEKK (116 aa)) form a globular region. The segment covering 88–101 (PGITSTSFSGKTKV) has biased composition (polar residues). Residues 117-296 (KRAAWDLKGQ…LVQELKGNIR (180 aa)) are a coiled coil. The region spanning 294-633 (NIRVFCRVRP…LRFASKVNEC (340 aa)) is the Kinesin motor domain. 386-393 (GQTGSGKT) contacts ATP.

The protein belongs to the TRAFAC class myosin-kinesin ATPase superfamily. Kinesin family. NCD subfamily.

It localises to the cytoplasm. The protein localises to the cytoskeleton. Functionally, promotes mitotic spindle assembly. This is Carboxy-terminal kinesin 2 from Xenopus laevis (African clawed frog).